The following is a 765-amino-acid chain: Putative U-box domain-containing protein 50 (765 aa).

The stretch at Q198 to R391 forms a coiled coil. Residues S422 to S765 form the Protein kinase domain. ATP is bound by residues K428–V436 and K449. In terms of domain architecture, U-box spans D688–Q762.

The protein belongs to the protein kinase superfamily. Ser/Thr protein kinase family.

It carries out the reaction S-ubiquitinyl-[E2 ubiquitin-conjugating enzyme]-L-cysteine + [acceptor protein]-L-lysine = [E2 ubiquitin-conjugating enzyme]-L-cysteine + N(6)-ubiquitinyl-[acceptor protein]-L-lysine.. It participates in protein modification; protein ubiquitination. Its function is as follows. Functions as an E3 ubiquitin ligase. The polypeptide is Putative U-box domain-containing protein 50 (PUB50) (Arabidopsis thaliana (Mouse-ear cress)).